The following is a 368-amino-acid chain: Aminomethyltransferase (368 aa).

The protein belongs to the GcvT family. The glycine cleavage system is composed of four proteins: P, T, L and H.

The catalysed reaction is N(6)-[(R)-S(8)-aminomethyldihydrolipoyl]-L-lysyl-[protein] + (6S)-5,6,7,8-tetrahydrofolate = N(6)-[(R)-dihydrolipoyl]-L-lysyl-[protein] + (6R)-5,10-methylene-5,6,7,8-tetrahydrofolate + NH4(+). The glycine cleavage system catalyzes the degradation of glycine. The protein is Aminomethyltransferase of Xylella fastidiosa (strain M12).